The sequence spans 172 residues: Lectin (172 aa).

Residues 1-20 form the signal peptide; it reads MVWCLADLRAYVLVLLVISG. Positions 36–172 constitute a C-type lectin domain; that stretch reads DCTPGWDCHF…ICKYTTPCRY (137 aa). 2 disulfide bridges follow: Cys65–Cys164 and Cys140–Cys156. N-linked (GlcNAc...) asparagine glycosylation is present at Asn93.

Heterodimer. Anterior part of oviduct.

It is found in the secreted. Its function is as follows. May be involved in protection of eggs and embryos against microorganisms. Calcium-dependent lectin with specificity to D-glucose and D-glucosamine. Can agglutinate microorganisms in vivo. This is Lectin (LEC) from Pleurodeles waltl (Iberian ribbed newt).